The following is a 249-amino-acid chain: Probable transcriptional regulatory protein MXAN_4974 (249 aa).

Belongs to the TACO1 family.

It is found in the cytoplasm. The protein is Probable transcriptional regulatory protein MXAN_4974 of Myxococcus xanthus (strain DK1622).